The sequence spans 171 residues: Adenine phosphoribosyltransferase (171 aa).

The protein belongs to the purine/pyrimidine phosphoribosyltransferase family. In terms of assembly, homodimer.

Its subcellular location is the cytoplasm. The catalysed reaction is AMP + diphosphate = 5-phospho-alpha-D-ribose 1-diphosphate + adenine. It functions in the pathway purine metabolism; AMP biosynthesis via salvage pathway; AMP from adenine: step 1/1. Catalyzes a salvage reaction resulting in the formation of AMP, that is energically less costly than de novo synthesis. The protein is Adenine phosphoribosyltransferase of Mesomycoplasma hyopneumoniae (strain 232) (Mycoplasma hyopneumoniae).